Consider the following 375-residue polypeptide: MAISATTQSALVGGSQDDIILSTSAPIPQRLEDDQVAVAVKAIALNPVDTKMLGDFHTPGAVLGCEFSGVITSAGPVATSEWGLREGDRVSGAIMGMNPLRPQIGAFAQHTVAPAHVVLKVREDWDFAQGAGMGNAWYTSGWALFHTMGLPAGPQLEPLHTLVPPPPGNAGKLPSTNKPITVLVSGGSSSTGTTAVQLLKLAGYHVIATCSARNFDLARQYGADEVFDHSSPTCAADIRERTRNALRFALDCITTPETTRLCYAALGRSGGRYVSLDPFSEAVAATRGVVRPDWVLGPELVGEDIAWPEPHGRKGNPKARVFCEAWTRTLQRLVDQGLVKTHPQLVRDTGLKGALGGLDDIRAKKVSGQKLVYLL.

Position 48–51 (48–51 (VDTK)) interacts with NADP(+). A substrate-binding site is contributed by 135–142 (NAWYTSGW). Residues 188 to 191 (SSST), 211 to 214 (SARN), and 276 to 277 (LD) contribute to the NADP(+) site. 297 to 301 (GPELV) contributes to the substrate binding site. 366 to 367 (VS) is a binding site for NADP(+).

The protein belongs to the zinc-containing alcohol dehydrogenase family. In terms of assembly, monomer.

The catalysed reaction is (2S,4S)-4-hydroxy-4-methylglutamate + 8 malonyl-CoA + 3 S-adenosyl-L-methionine + ATP + 8 NADPH + 11 H(+) = (2S)-3-[(2S)-3,5-dioxo-4-[(2E,4R,6R,8E,10E,12E)-4,6,12-trimethyltetradeca-2,8,10,12-tetraenoyl]pyrrolidin-2-yl]-2-hydroxy-2-methylpropanoate + AMP + 3 S-adenosyl-L-homocysteine + 8 CO2 + diphosphate + 8 NADP(+) + 8 CoA + 6 H2O. It functions in the pathway secondary metabolite biosynthesis. Trans-enoyl reductase; part of the gene cluster that mediates the biosynthesis of the tetramic acid Sch210972, a potential anti-HIV fungal natural product that contains a decalin core. The PKS module of cghG together with the enoylreductase cghC catalyze the formation of the polyketide unit which is then conjugated to 4-hydroxyl-4-methyl glutamate (HMG) by the condensation domain of the cghG NRPS module. One unique structural feature of Sch210972 is the tetramic acid motif proposed to be derived from the non-proteinogenic amino acid HMG, by a Dieckmann-type condensation catalyzed by the reductase domain of cghG. The aldolase cghB catalyzes the aldol condensation of 2 molecules of pyruvic acid to yield the intermediate 4-hydroxyl-4-methyl-2-oxoglutarate (HMOG), which can then be stereoselectively transaminated by an unidentified enzyme to form HMG. The Diels-Alderase cghA then uses the Dieckmann product released by cghG as substrate and catalyzes the Diels-Alder cycloaddition to form the decalin ring of Sch210972. CghA also suppresses the nonenzymatic formation of the alternative stereoisomer. In Chaetomium globosum (strain ATCC 6205 / CBS 148.51 / DSM 1962 / NBRC 6347 / NRRL 1970) (Soil fungus), this protein is Trans-enoyl reductase cghC.